We begin with the raw amino-acid sequence, 126 residues long: Large ribosomal subunit protein bL12 (126 aa).

Low complexity predominate over residues 36 to 55; the sequence is APAPAAAPAAGGDQGGAEAA. A disordered region spans residues 36 to 57; sequence APAPAAAPAAGGDQGGAEAAEQ.

The protein belongs to the bacterial ribosomal protein bL12 family. Homodimer. Part of the ribosomal stalk of the 50S ribosomal subunit. Forms a multimeric L10(L12)X complex, where L10 forms an elongated spine to which 2 to 4 L12 dimers bind in a sequential fashion. Binds GTP-bound translation factors.

In terms of biological role, forms part of the ribosomal stalk which helps the ribosome interact with GTP-bound translation factors. Is thus essential for accurate translation. This is Large ribosomal subunit protein bL12 from Natranaerobius thermophilus (strain ATCC BAA-1301 / DSM 18059 / JW/NM-WN-LF).